Reading from the N-terminus, the 503-residue chain is Cytochrome P450 11B1, mitochondrial (503 aa).

The N-terminal 24 residues, 1–24 (MALRAKAEVCMAVPWLSLQRAQAL), are a transit peptide targeting the mitochondrion. Cys-450 contributes to the heme binding site.

Belongs to the cytochrome P450 family. It depends on heme as a cofactor. In terms of tissue distribution, expressed in the zona fasciculata/reticularis of the adrenal cortex.

The protein localises to the mitochondrion inner membrane. It catalyses the reaction a steroid + 2 reduced [adrenodoxin] + O2 + 2 H(+) = an 11beta-hydroxysteroid + 2 oxidized [adrenodoxin] + H2O. It carries out the reaction 11-deoxycortisol + 2 reduced [adrenodoxin] + O2 + 2 H(+) = cortisol + 2 oxidized [adrenodoxin] + H2O. The enzyme catalyses 21-hydroxyprogesterone + 2 reduced [adrenodoxin] + O2 + 2 H(+) = corticosterone + 2 oxidized [adrenodoxin] + H2O. It participates in steroid biosynthesis; glucocorticoid biosynthesis. The protein operates within steroid hormone biosynthesis. In terms of biological role, a cytochrome P450 monooxygenase involved in the biosynthesis of adrenal corticoids. Catalyzes a variety of reactions that are essential for many species, including detoxification, defense, and the formation of endogenous chemicals like steroid hormones. Steroid 11beta, 18- and 19-hydroxylase with preferred regioselectivity at 11beta, then 18, and lastly 19. Catalyzes the hydroxylation of 11-deoxycortisol and 11-deoxycorticosterone (21-hydroxyprogesterone) at 11beta position, yielding cortisol or corticosterone, respectively, but cannot produce aldosterone. Mechanistically, uses molecular oxygen inserting one oxygen atom into a substrate for hydroxylation and reducing the second into a water molecule. Two electrons are provided by NADPH via a two-protein mitochondrial transfer system comprising flavoprotein FDXR (adrenodoxin/ferredoxin reductase) and nonheme iron-sulfur protein FDX1 or FDX2 (adrenodoxin/ferredoxin). Due to its lack of 18-oxidation activity, it is incapable of generating aldosterone. Could also be involved in the androgen metabolic pathway. This is Cytochrome P450 11B1, mitochondrial from Homo sapiens (Human).